The chain runs to 184 residues: UPF0316 protein BPUM_0594 (184 aa).

3 helical membrane passes run 9-29, 41-61, and 67-87; these read AFTM…FSTM, AAAF…SIVL, and IQNV…GMKI.

It belongs to the UPF0316 family.

It is found in the cell membrane. The sequence is that of UPF0316 protein BPUM_0594 from Bacillus pumilus (strain SAFR-032).